The sequence spans 327 residues: GTPase Obg (327 aa).

The Obg domain maps to 1-159 (MKFLDQVKIY…YVIWLQLKTI (159 aa)). The 168-residue stretch at 160–327 (ADVGIVGLPN…IKAKLLSYVS (168 aa)) folds into the OBG-type G domain. Residues 166–173 (GLPNAGKS), 191–195 (FTTLN), 212–215 (DIPG), 279–282 (NKTD), and 308–310 (STL) contribute to the GTP site. Mg(2+)-binding residues include S173 and T193.

Belongs to the TRAFAC class OBG-HflX-like GTPase superfamily. OBG GTPase family. In terms of assembly, monomer. Mg(2+) serves as cofactor.

It localises to the cytoplasm. In terms of biological role, an essential GTPase which binds GTP, GDP and possibly (p)ppGpp with moderate affinity, with high nucleotide exchange rates and a fairly low GTP hydrolysis rate. Plays a role in control of the cell cycle, stress response, ribosome biogenesis and in those bacteria that undergo differentiation, in morphogenesis control. This chain is GTPase Obg, found in Pelagibacter ubique (strain HTCC1062).